A 246-amino-acid polypeptide reads, in one-letter code: 14-3-3 protein beta/alpha (246 aa).

N-acetylmethionine is present on methionine 1. The residue at position 2 (threonine 2) is an N-acetylthreonine; in 14-3-3 protein beta/alpha, N-terminally processed. Threonine 2 bears the Phosphothreonine mark. Position 5 is an N6-acetyllysine (lysine 5). Residue lysine 51 is modified to N6-acetyllysine; alternate. Residue lysine 51 forms a Glycyl lysine isopeptide (Lys-Gly) (interchain with G-Cter in SUMO2); alternate linkage. At serine 60 the chain carries Phosphoserine. Lysine 70 carries the N6-acetyllysine modification. Tyrosine 84 and tyrosine 106 each carry 3'-nitrotyrosine. At lysine 117 the chain carries N6-acetyllysine. Residues serine 186 and serine 232 each carry the phosphoserine modification.

This sequence belongs to the 14-3-3 family. Homodimer. Interacts with SAMSN1 and PRKCE. Interacts with AKAP13. Interacts with SSH1 and TORC2/CRTC2. Interacts with ABL1; the interaction results in cytoplasmic location of ABL1 and inhibition of cABL-mediated apoptosis. Interacts with ROR2 (dimer); the interaction results in phosphorylation of YWHAB on tyrosine residues. Interacts with GAB2. Interacts with YAP1 (phosphorylated form). Interacts with the phosphorylated (by AKT1) form of SRPK2. Interacts with PKA-phosphorylated AANAT. Interacts with MYO1C. Interacts with SIRT2. Interacts with the 'Thr-369' phosphorylated form of DAPK2. Interacts with PI4KB, TBC1D22A and TBC1D22B. Interacts with the 'Ser-1134' and 'Ser-1161' phosphorylated form of SOS1. Interacts (via phosphorylated form) with YWHAB; this interaction occurs in a protein kinase AKT1-dependent manner. Interacts with SLITRK1. Interacts with SYNPO2 (phosphorylated form); YWHAB competes with ACTN2 for interaction with SYNPO2. Interacts with RIPOR2 (via phosphorylated form); this interaction occurs in a chemokine-dependent manner and does not compete for binding of RIPOR2 with RHOA nor blocks inhibition of RIPOR2-mediated RHOA activity. Interacts with MARK2 and MARK3. Interacts with TESK1; the interaction is dependent on the phosphorylation of TESK1 'Ser-439' and inhibits TESK1 kinase activity. Interacts with MEFV. Interacts with HDAC4. Interacts with ADAM22 (via C-terminus). The alpha, brain-specific form differs from the beta form in being phosphorylated. Phosphorylated on Ser-60 by protein kinase C delta type catalytic subunit in a sphingosine-dependent fashion. Post-translationally, isoform Short contains a N-acetylmethionine at position 1.

It is found in the cytoplasm. It localises to the melanosome. In terms of biological role, adapter protein implicated in the regulation of a large spectrum of both general and specialized signaling pathways. Binds to a large number of partners, usually by recognition of a phosphoserine or phosphothreonine motif. Binding generally results in the modulation of the activity of the binding partner. Negative regulator of osteogenesis. Blocks the nuclear translocation of the phosphorylated form (by AKT1) of SRPK2 and antagonizes its stimulatory effect on cyclin D1 expression resulting in blockage of neuronal apoptosis elicited by SRPK2. Negative regulator of signaling cascades that mediate activation of MAP kinases via AKAP13. The sequence is that of 14-3-3 protein beta/alpha (Ywhab) from Rattus norvegicus (Rat).